The sequence spans 178 residues: Hypoxanthine phosphoribosyltransferase (178 aa).

Residues Arg43 and Gly44 each coordinate diphosphate. Position 99 (Glu99) interacts with GMP. Position 99 (Glu99) interacts with IMP. Mg(2+) is bound by residues Glu99 and Asp100. The Proton acceptor role is filled by Asp103. Residues 103–108 (DSGNTL), Lys131, and Asp159 each bind GMP. Residues 103–108 (DSGNTL) and Lys131 contribute to the IMP site. Arg165 is a binding site for diphosphate.

The protein belongs to the purine/pyrimidine phosphoribosyltransferase family. Homotetramer. Mg(2+) serves as cofactor.

It is found in the cytoplasm. The catalysed reaction is IMP + diphosphate = hypoxanthine + 5-phospho-alpha-D-ribose 1-diphosphate. It catalyses the reaction GMP + diphosphate = guanine + 5-phospho-alpha-D-ribose 1-diphosphate. The protein operates within purine metabolism; IMP biosynthesis via salvage pathway; IMP from hypoxanthine: step 1/1. In terms of biological role, purine salvage pathway enzyme which catalyzes the transfer of the ribosyl-5-phosphate group from 5-phospho-alpha-D-ribose 1-diphosphate (PRPP) to the N9 position of hypoxanthine to yield IMP (inosine 5'-monophosphate). To a lesser extent, can also act on guanine leading to GMP, but shows a highly less efficient activity with xanthine. This is Hypoxanthine phosphoribosyltransferase (hpt) from Shigella flexneri.